Here is a 454-residue protein sequence, read N- to C-terminus: CBL-interacting protein kinase 17 (454 aa).

The 256-residue stretch at 13–268 folds into the Protein kinase domain; the sequence is YEMGRTLGEG…MAGIKSHEWF (256 aa). Residues 19 to 27 and lysine 42 each bind ATP; that span reads LGEGNFGKV. Catalysis depends on aspartate 136, which acts as the Proton acceptor. An activation loop region spans residues 154–183; it reads DFGLSALPQHLGNDGLLHTTCGSPNYIAPE. Residues 304–328 form the NAF domain; the sequence is KNSHQINAFQLIGMASSLDLSGFFE. The interval 334–363 is PPI; sequence QRRIRFTSTHPPKDAFDKIESSATELGFQV.

The protein belongs to the protein kinase superfamily. CAMK Ser/Thr protein kinase family. SNF1 subfamily. The cofactor is Mn(2+).

The catalysed reaction is L-seryl-[protein] + ATP = O-phospho-L-seryl-[protein] + ADP + H(+). It carries out the reaction L-threonyl-[protein] + ATP = O-phospho-L-threonyl-[protein] + ADP + H(+). Functionally, CIPK serine-threonine protein kinases interact with CBL proteins. Binding of a CBL protein to the regulatory NAF domain of CIPK protein lead to the activation of the kinase in a calcium-dependent manner. The sequence is that of CBL-interacting protein kinase 17 (CIPK17) from Oryza sativa subsp. japonica (Rice).